The following is a 78-amino-acid chain: Delta-conotoxin-like TxMKLT1-0111 (78 aa).

Positions 1–22 (MKLTCMMIVAVLFLTAWTFATA) are cleaved as a signal peptide. Positions 23–49 (DDSGNGLENLFSNAHHQMKNPEASKLN) are excised as a propeptide. Cystine bridges form between Cys53–Cys68, Cys60–Cys72, and Cys67–Cys77.

The protein belongs to the conotoxin O1 superfamily. As to expression, expressed by the venom duct.

It is found in the secreted. Functionally, delta-conotoxins bind to site 6 of voltage-gated sodium channels (Nav) and inhibit the inactivation process. This chain is Delta-conotoxin-like TxMKLT1-0111, found in Conus textile (Cloth-of-gold cone).